Here is a 282-residue protein sequence, read N- to C-terminus: Bifunctional protein FolD (282 aa).

Residues 164–166 (GAS), Ile189, and Ile230 each bind NADP(+).

Belongs to the tetrahydrofolate dehydrogenase/cyclohydrolase family. Homodimer.

It carries out the reaction (6R)-5,10-methylene-5,6,7,8-tetrahydrofolate + NADP(+) = (6R)-5,10-methenyltetrahydrofolate + NADPH. The catalysed reaction is (6R)-5,10-methenyltetrahydrofolate + H2O = (6R)-10-formyltetrahydrofolate + H(+). It functions in the pathway one-carbon metabolism; tetrahydrofolate interconversion. In terms of biological role, catalyzes the oxidation of 5,10-methylenetetrahydrofolate to 5,10-methenyltetrahydrofolate and then the hydrolysis of 5,10-methenyltetrahydrofolate to 10-formyltetrahydrofolate. The sequence is that of Bifunctional protein FolD from Nitratiruptor sp. (strain SB155-2).